We begin with the raw amino-acid sequence, 70 residues long: Cytochrome c oxidase subunit 8B, mitochondrial (70 aa).

A mitochondrion-targeting transit peptide spans 1-24 (MLSLRPALRLLQAPLRCWAVPKAH). At 25-35 (VSAKPAETPTS) the chain is on the mitochondrial matrix side. Residues 36 to 59 (PAEQAVGLSFIFITFLGPAGWILS) traverse the membrane as a helical segment. Over 60–70 (HVENYKKRPRA) the chain is Mitochondrial intermembrane.

Belongs to the cytochrome c oxidase VIII family. Component of the cytochrome c oxidase (complex IV, CIV), a multisubunit enzyme composed of 14 subunits. The complex is composed of a catalytic core of 3 subunits MT-CO1, MT-CO2 and MT-CO3, encoded in the mitochondrial DNA, and 11 supernumerary subunits COX4I, COX5A, COX5B, COX6A, COX6B, COX6C, COX7A, COX7B, COX7C, COX8 and NDUFA4, which are encoded in the nuclear genome. The complex exists as a monomer or a dimer and forms supercomplexes (SCs) in the inner mitochondrial membrane with NADH-ubiquinone oxidoreductase (complex I, CI) and ubiquinol-cytochrome c oxidoreductase (cytochrome b-c1 complex, complex III, CIII), resulting in different assemblies (supercomplex SCI(1)III(2)IV(1) and megacomplex MCI(2)III(2)IV(2)).

The protein localises to the mitochondrion inner membrane. Its pathway is energy metabolism; oxidative phosphorylation. Functionally, component of the cytochrome c oxidase, the last enzyme in the mitochondrial electron transport chain which drives oxidative phosphorylation. The respiratory chain contains 3 multisubunit complexes succinate dehydrogenase (complex II, CII), ubiquinol-cytochrome c oxidoreductase (cytochrome b-c1 complex, complex III, CIII) and cytochrome c oxidase (complex IV, CIV), that cooperate to transfer electrons derived from NADH and succinate to molecular oxygen, creating an electrochemical gradient over the inner membrane that drives transmembrane transport and the ATP synthase. Cytochrome c oxidase is the component of the respiratory chain that catalyzes the reduction of oxygen to water. Electrons originating from reduced cytochrome c in the intermembrane space (IMS) are transferred via the dinuclear copper A center (CU(A)) of subunit 2 and heme A of subunit 1 to the active site in subunit 1, a binuclear center (BNC) formed by heme A3 and copper B (CU(B)). The BNC reduces molecular oxygen to 2 water molecules using 4 electrons from cytochrome c in the IMS and 4 protons from the mitochondrial matrix. The polypeptide is Cytochrome c oxidase subunit 8B, mitochondrial (COX8B) (Ateles belzebuth (White-bellied spider monkey)).